The chain runs to 570 residues: Frizzled-2 (570 aa).

A signal peptide spans 1-28; sequence MRARSALPRSALPRLLLPLLLLPAAGPA. Residues 29 to 252 are Extracellular-facing; it reads QFHGEKGISI…QEETRFARLW (224 aa). The region spanning 39 to 158 is the FZ domain; that stretch reads PDHGFCQPIS…HGAEQICVGQ (120 aa). 5 cysteine pairs are disulfide-bonded: C44–C105, C52–C98, C89–C126, C115–C155, and C119–C143. The N-linked (GlcNAc...) asparagine glycan is linked to N58. The N-linked (GlcNAc...) asparagine glycan is linked to N159. The tract at residues 166-194 is disordered; sequence PALLTTAPPSGLQPGAGGTPGGPGGGGSP. Positions 179–193 are enriched in gly residues; sequence PGAGGTPGGPGGGGS. Residues 253 to 273 traverse the membrane as a helical segment; that stretch reads ILTWSVLCCASTFFTVTTYLV. Topologically, residues 274–284 are cytoplasmic; sequence DMQRFRYPERP. The helical transmembrane segment at 285–305 threads the bilayer; sequence IIFLSGCYTMVSVAYIAGFVL. Residues 306–332 are Extracellular-facing; the sequence is QERVVCNERFSEDGYRTVVQGTKKEGC. Residues 333-353 traverse the membrane as a helical segment; that stretch reads TILFMMLYFFSMASSIWWVIL. Topologically, residues 354-375 are cytoplasmic; it reads SLTWFLAAGMKWGHEAIEANSQ. The helical transmembrane segment at 376–396 threads the bilayer; the sequence is YFHLAAWAVPAVKTITILAMG. Topologically, residues 397–419 are extracellular; the sequence is QIDGDLLSGVCFVGLNSLDPLRG. A helical transmembrane segment spans residues 420-440; the sequence is FVLAPLFVYLFIGTSFLLAGF. Residues 441 to 466 lie on the Cytoplasmic side of the membrane; it reads VSLFRIRTIMKHDGTKTEKLERLMVR. Residues 467–487 form a helical membrane-spanning segment; the sequence is IGVFSVLYTVPATIVIACYFY. Residues 488-524 lie on the Extracellular side of the membrane; it reads EQAFREHWERSWVSQHCKSLAIPCPAHYTPRMSPDFT. Residues 525-545 form a helical membrane-spanning segment; sequence VYMIKYLMTLIVGITSGFWIW. Residues 546 to 570 lie on the Cytoplasmic side of the membrane; that stretch reads SGKTLHSWRKFYTRLTNSRHGETTV. The Lys-Thr-X-X-X-Trp motif, mediates interaction with the PDZ domain of Dvl family members signature appears at 548–553; that stretch reads KTLHSW. Positions 568-570 match the PDZ-binding motif; sequence TTV.

The protein belongs to the G-protein coupled receptor Fz/Smo family. Post-translationally, ubiquitinated by ZNRF3, leading to its degradation by the proteasome. Expressed in embryonic and adult heart, lung, chondrocytes and brain. Also expressed in the developing gastrointestinal tract (strongest in foregut), much weaker expression in the adult. No expression in fetal liver and adult spleen. Up-regulated in esophageal squamous cell carcinomas.

It localises to the membrane. Its subcellular location is the cell membrane. Functionally, receptor for Wnt proteins. Most of frizzled receptors are coupled to the beta-catenin canonical signaling pathway, which leads to the activation of disheveled proteins, inhibition of GSK-3 kinase, nuclear accumulation of beta-catenin and activation of Wnt target genes. A second signaling pathway involving PKC and calcium fluxes has been seen for some family members, but it is not yet clear if it represents a distinct pathway or if it can be integrated in the canonical pathway, as PKC seems to be required for Wnt-mediated inactivation of GSK-3 kinase. Both pathways seem to involve interactions with G-proteins. May be involved in transduction and intercellular transmission of polarity information during tissue morphogenesis and/or in differentiated tissues. The polypeptide is Frizzled-2 (Fzd2) (Mus musculus (Mouse)).